The primary structure comprises 249 residues: Cilia- and flagella-associated protein 410 (249 aa).

LRR repeat units follow at residues 19–40 (NVRK…REMP), 41–62 (SLEV…RSCR), and 63–84 (RLSE…FYLK). The 41-residue stretch at 97-137 (NPCCGTSPHLYRMTVLRNLPHLQKLDNQAVTEEELTRALME) folds into the LRRCT domain. The tract at residues 146-203 (HREGAGNGCPKPPYALNSVSSATETSQHLLSYTEETEVQGQTTTDQSPSFSPRDTMRS) is disordered. A compositionally biased stretch (polar residues) spans 162-175 (NSVSSATETSQHLL).

As to quaternary structure, found in a complex with CFAP410, NEK1 and SPATA7. Interacts with NEK1. In terms of tissue distribution, expressed in the retina.

It localises to the cell projection. It is found in the cilium. The protein resides in the cytoplasm. The protein localises to the cytoskeleton. Its subcellular location is the cilium basal body. It localises to the mitochondrion. It is found in the photoreceptor outer segment. In terms of biological role, plays a role in cilia formation and/or maintenance. Plays a role in the regulation of cell morphology and cytoskeletal organization. Involved in DNA damage repair. The protein is Cilia- and flagella-associated protein 410 of Mus musculus (Mouse).